A 340-amino-acid polypeptide reads, in one-letter code: Cytosolic Fe-S cluster assembly factor NBP35 (340 aa).

Residues cysteine 31, cysteine 45, cysteine 48, and cysteine 54 each contribute to the [4Fe-4S] cluster site. 84–91 (GKGGVGKS) provides a ligand contact to ATP. Residues cysteine 257 and cysteine 260 each contribute to the [4Fe-4S] cluster site.

It belongs to the Mrp/NBP35 ATP-binding proteins family. NUBP1/NBP35 subfamily. In terms of assembly, heterotetramer of 2 NBP35 and 2 CFD1 chains. [4Fe-4S] cluster serves as cofactor.

It is found in the cytoplasm. Functionally, component of the cytosolic iron-sulfur (Fe/S) protein assembly (CIA) machinery. Required for maturation of extramitochondrial Fe-S proteins. The NBP35-CFD1 heterotetramer forms a Fe-S scaffold complex, mediating the de novo assembly of an Fe-S cluster and its transfer to target apoproteins. The chain is Cytosolic Fe-S cluster assembly factor NBP35 from Phaeosphaeria nodorum (strain SN15 / ATCC MYA-4574 / FGSC 10173) (Glume blotch fungus).